The chain runs to 432 residues: Ribulose bisphosphate carboxylase-like protein 2 (432 aa).

Residues K198, D200, and E201 each coordinate Mg(2+). Residue K198 is modified to N6-carboxylysine.

This sequence belongs to the RuBisCO large chain family. Type IV subfamily. Homodimer. It depends on Mg(2+) as a cofactor.

Its function is as follows. May be involved in sulfur metabolism and oxidative stress response. Does not show RuBisCO activity. This Rhodopseudomonas palustris (strain ATCC BAA-98 / CGA009) protein is Ribulose bisphosphate carboxylase-like protein 2 (rlp2).